Reading from the N-terminus, the 692-residue chain is DNA ligase (692 aa).

NAD(+)-binding positions include Asp-35–Asp-39, Ser-88–Leu-89, and Glu-117. The N6-AMP-lysine intermediate role is filled by Lys-119. Positions 140, 176, 301, and 325 each coordinate NAD(+). Zn(2+) is bound by residues Cys-416, Cys-419, Cys-434, and Cys-439. Residues Leu-611–Thr-692 form the BRCT domain.

Belongs to the NAD-dependent DNA ligase family. LigA subfamily. The cofactor is Mg(2+). It depends on Mn(2+) as a cofactor.

The catalysed reaction is NAD(+) + (deoxyribonucleotide)n-3'-hydroxyl + 5'-phospho-(deoxyribonucleotide)m = (deoxyribonucleotide)n+m + AMP + beta-nicotinamide D-nucleotide.. Functionally, DNA ligase that catalyzes the formation of phosphodiester linkages between 5'-phosphoryl and 3'-hydroxyl groups in double-stranded DNA using NAD as a coenzyme and as the energy source for the reaction. It is essential for DNA replication and repair of damaged DNA. The chain is DNA ligase from Mesomycoplasma hyopneumoniae (strain J / ATCC 25934 / NCTC 10110) (Mycoplasma hyopneumoniae).